Reading from the N-terminus, the 253-residue chain is MLTKRIIPCLDVKGGRVVKGVQFLELRDAGDPVEIAELYDRQGADELTFLDITASSDERSIIIDVVRRTAERVFMPLTVGGGVRTVDDIRNLLNAGADKVSINTAAVHRPEFVREAAERFGSQCTVVAIDARQVPGENRWEVYTHGGRNPTGIDAVEWARRMEEYGAGEILLTSMDRDGTKDGYDIPLTRAIVDAVSIPVIASGGVGNLEHLYDGFVKAGASACLAASIFHYKEYTIGEAKEYLRQRGVPVRL.

Catalysis depends on residues Asp11 and Asp130.

This sequence belongs to the HisA/HisF family. Heterodimer of HisH and HisF.

Its subcellular location is the cytoplasm. The catalysed reaction is 5-[(5-phospho-1-deoxy-D-ribulos-1-ylimino)methylamino]-1-(5-phospho-beta-D-ribosyl)imidazole-4-carboxamide + L-glutamine = D-erythro-1-(imidazol-4-yl)glycerol 3-phosphate + 5-amino-1-(5-phospho-beta-D-ribosyl)imidazole-4-carboxamide + L-glutamate + H(+). Its pathway is amino-acid biosynthesis; L-histidine biosynthesis; L-histidine from 5-phospho-alpha-D-ribose 1-diphosphate: step 5/9. In terms of biological role, IGPS catalyzes the conversion of PRFAR and glutamine to IGP, AICAR and glutamate. The HisF subunit catalyzes the cyclization activity that produces IGP and AICAR from PRFAR using the ammonia provided by the HisH subunit. The chain is Imidazole glycerol phosphate synthase subunit HisF from Geobacter sulfurreducens (strain ATCC 51573 / DSM 12127 / PCA).